The following is a 192-amino-acid chain: Fanconi anemia core complex-associated protein 20 (192 aa).

Residues 1 to 16 show a composition bias toward basic residues; it reads MEATRRSRLSLSRRRP. 2 disordered regions span residues 1 to 34 and 51 to 151; these read MEATRRSRLSLSRRRPPLGVRPRSNTAGSLPDGG and LNVD…SSVD. Basic and acidic residues predominate over residues 66-76; the sequence is QEPRRSPERPP. Phosphoserine occurs at positions 119 and 149. The segment covering 132–149 has biased composition (low complexity); the sequence is PSAEEQPSEEQPSQRQSS. The segment at 156 to 192 adopts a UBZ2-type zinc-finger fold; that stretch reads LQSCPMCQVDFAPGLAQLDIDGHLAQCLADSTDDIEW. Positions 159, 162, 178, and 182 each coordinate Zn(2+).

As to quaternary structure, component of the Fanconi anemia (FA) complex. Interacts with FANCA; interaction is direct. Interacts with REV1.

It localises to the nucleus. It is found in the chromosome. Its function is as follows. Component of the Fanconi anemia (FA) complex required to recruit the FA complex to DNA interstrand cross-links (ICLs) and promote ICLs repair. Following DNA damage recognizes and binds 'Lys-63'-linked ubiquitin generated by RNF8 at ICLs and recruits other components of the FA complex. Promotes translesion synthesis via interaction with REV1. The chain is Fanconi anemia core complex-associated protein 20 from Bos taurus (Bovine).